We begin with the raw amino-acid sequence, 250 residues long: Orotidine 5'-phosphate decarboxylase (250 aa).

Residues Asp9, Lys40, 67 to 76 (DLKFHDIPNT), Thr132, Arg190, Gln204, Gly224, and Arg225 contribute to the substrate site. Lys69 functions as the Proton donor in the catalytic mechanism.

It belongs to the OMP decarboxylase family. Type 1 subfamily. In terms of assembly, homodimer.

It catalyses the reaction orotidine 5'-phosphate + H(+) = UMP + CO2. It functions in the pathway pyrimidine metabolism; UMP biosynthesis via de novo pathway; UMP from orotate: step 2/2. Its function is as follows. Catalyzes the decarboxylation of orotidine 5'-monophosphate (OMP) to uridine 5'-monophosphate (UMP). In Nitratidesulfovibrio vulgaris (strain DSM 19637 / Miyazaki F) (Desulfovibrio vulgaris), this protein is Orotidine 5'-phosphate decarboxylase.